Here is a 222-residue protein sequence, read N- to C-terminus: Cytochrome b6-f complex iron-sulfur subunit, chloroplastic (222 aa).

The transit peptide at 1–49 (MASTALSTASNPTQLCRTRASSLCKPVKGLGFGRERIPRNITCMAGSIS) directs the protein to the chloroplast. The chain crosses the membrane as a helical span at residues 66–86 (LLGAISLPTFGMLVPYGSFLV). The 97-residue stretch at 109 to 205 (VEDWLKTHGP…ADVDDGKVVF (97 aa)) folds into the Rieske domain. Residues cysteine 151, histidine 153, cysteine 169, and histidine 172 each contribute to the [2Fe-2S] cluster site. A disulfide bridge connects residues cysteine 156 and cysteine 171.

Belongs to the Rieske iron-sulfur protein family. As to quaternary structure, the 4 large subunits of the cytochrome b6-f complex are cytochrome b6, subunit IV (17 kDa polypeptide, petD), cytochrome f and the Rieske protein, while the 4 small subunits are petG, petL, petM and petN. The complex functions as a dimer. [2Fe-2S] cluster serves as cofactor.

Its subcellular location is the plastid. It localises to the chloroplast thylakoid membrane. The catalysed reaction is 2 oxidized [plastocyanin] + a plastoquinol + 2 H(+)(in) = 2 reduced [plastocyanin] + a plastoquinone + 4 H(+)(out). Component of the cytochrome b6-f complex, which mediates electron transfer between photosystem II (PSII) and photosystem I (PSI), cyclic electron flow around PSI, and state transitions. The protein is Cytochrome b6-f complex iron-sulfur subunit, chloroplastic (petC) of Triticum aestivum (Wheat).